Consider the following 239-residue polypeptide: MSLIIVLVISVLSADAVLSMDNELYLNLEPSQRSSWPVARAVRMQFSKRSEGGRESRKMQGCQILESLNDIAREALRTPRHTTKRISKDEMEFFEGRCLSVGESERTVLGTKWCGAGNEAANYSDLGYFNNVDRCCREHDHCDNIPAGETKYGLKNEGTYTMMNCKCEKAFDKCLSDISGYFTRKAVSAVKFTYFTLYGNGCYNVKCENGRSPSNECPNGVAEYTGETGLGAKVINFGK.

Residues 1-19 form the signal peptide; it reads MSLIIVLVISVLSADAVLS. The propeptide occupies 20-105; that stretch reads MDNELYLNLE…GRCLSVGESE (86 aa). Residues Trp-113, Gly-115, and Gly-117 each coordinate Ca(2+). Intrachain disulfides connect Cys-114–Cys-136, Cys-135–Cys-174, Cys-142–Cys-167, Cys-165–Cys-202, and Cys-207–Cys-217. Residue His-139 is part of the active site. Asp-140 contacts Ca(2+). Residues 211–213 constitute a propeptide that is removed on maturation; that stretch reads RSP.

It belongs to the phospholipase A2 family. Group III subfamily. Heterodimer composed of a small subunit and a large subunit; disulfid-linked. Ca(2+) serves as cofactor. In terms of tissue distribution, expressed by the venom gland.

Its subcellular location is the secreted. The enzyme catalyses a 1,2-diacyl-sn-glycero-3-phosphocholine + H2O = a 1-acyl-sn-glycero-3-phosphocholine + a fatty acid + H(+). Toxic phospholipase A2, which may catalyze the calcium-dependent hydrolysis of the 2-acyl groups in 3-sn-phosphoglycerides. Inhibits both skeletal (RYR1) and cardiac (RYR2) ryanodine receptors (calcium release channels). Probably blocks ryanodine receptors by generating a lipid product. The chain is Phospholipase A2 from Hoffmannihadrurus gertschi (Scorpion).